We begin with the raw amino-acid sequence, 352 residues long: Quinolinate synthase (352 aa).

Iminosuccinate-binding residues include histidine 48 and serine 69. Cysteine 114 is a [4Fe-4S] cluster binding site. Iminosuccinate-binding positions include 140–142 (YAN) and serine 157. [4Fe-4S] cluster is bound at residue cysteine 201. Iminosuccinate contacts are provided by residues 227–229 (HPE) and threonine 244. [4Fe-4S] cluster is bound at residue cysteine 298.

This sequence belongs to the quinolinate synthase family. Type 1 subfamily. [4Fe-4S] cluster is required as a cofactor.

It localises to the cytoplasm. It catalyses the reaction iminosuccinate + dihydroxyacetone phosphate = quinolinate + phosphate + 2 H2O + H(+). It participates in cofactor biosynthesis; NAD(+) biosynthesis; quinolinate from iminoaspartate: step 1/1. Its function is as follows. Catalyzes the condensation of iminoaspartate with dihydroxyacetone phosphate to form quinolinate. The chain is Quinolinate synthase from Pseudomonas aeruginosa (strain UCBPP-PA14).